An 872-amino-acid polypeptide reads, in one-letter code: Metabotropic glutamate receptor 2 (872 aa).

A signal peptide spans 1 to 18; the sequence is MGSLLALLALLLLWGAVA. The Extracellular portion of the chain corresponds to 19–567; it reads EGPAKKVLTL…QEYIRWGDAW (549 aa). A disulfide bond links C50 and C92. Positions 57, 61, 145, 166, and 168 each coordinate L-glutamate. 2 N-linked (GlcNAc...) asparagine glycosylation sites follow: N203 and N286. 7 disulfides stabilise this stretch: C234/C518, C355/C362, C400/C407, C500/C519, C504/C522, C525/C537, and C540/C553. D295 contacts L-glutamate. N338 is a glycosylation site (N-linked (GlcNAc...) asparagine). K377 provides a ligand contact to L-glutamate. An N-linked (GlcNAc...) asparagine glycan is attached at N402. N547 carries an N-linked (GlcNAc...) asparagine glycan. A helical transmembrane segment spans residues 568–590; sequence AVGPVTIACLGALATLFVLGVFV. Topologically, residues 591-604 are cytoplasmic; it reads RHNATPVVKASGRE. Residues 605-625 form a helical membrane-spanning segment; the sequence is LCYILLGGVFLCYCMTFIFIA. Residues 626–636 are Extracellular-facing; that stretch reads KPSTAVCTLRR. A disulfide bridge links C632 with C721. A helical transmembrane segment spans residues 637–655; that stretch reads LGLGTAFSVCYSALLTKTN. Topologically, residues 656–679 are cytoplasmic; the sequence is RIARIFGGAREGAQRPRFISPASQ. The tract at residues 677-685 is important for interaction with HTR2A; it reads ASQVAICLA. A helical transmembrane segment spans residues 680–700; the sequence is VAICLALISGQLLIVVAWLVV. Residues 701–725 are Extracellular-facing; it reads EAPGTGKETAPERREVVTLRCNHRD. The helical transmembrane segment at 726-747 threads the bilayer; sequence ASMLGSLAYNVLLIALCTLYAF. The Cytoplasmic segment spans residues 748–760; the sequence is KTRKCPENFNEAK. The chain crosses the membrane as a helical span at residues 761 to 783; it reads FIGFTMYTTCIIWLAFLPIFYVT. Residues 784–793 are Extracellular-facing; the sequence is SSDYRVQTTT. A helical membrane pass occupies residues 794–819; the sequence is MCVSVSLSGSVVLGCLFAPKLHIILF. The Cytoplasmic portion of the chain corresponds to 820–872; sequence QPQKNVVSHRAPTSRFGSAAARASSSLGQGSGSQFVPTVCNGREVVDSTTSSL.

This sequence belongs to the G-protein coupled receptor 3 family. Forms heterodimers with GRM3 or GRM4. Interacts with TAMALIN. Interacts with HTR2A. As to quaternary structure, (Microbial infection) Interacts with H5N6 virus protein HA. In terms of assembly, (Microbial infection) Interacts with rabies virus protein G. (Microbial infection) Interacts with SARS-CoV-2 virus spike protein S. Detected in brain cortex (at protein level). Widely expressed in different regions of the adult brain as well as in fetal brain.

The protein resides in the cell membrane. The protein localises to the synapse. It localises to the cell projection. Its subcellular location is the dendrite. Functionally, dimeric G protein-coupled receptor which is activated by the excitatory neurotransmitter L-glutamate. Plays critical roles in modulating synaptic transmission and neuronal excitability. Upon activation by glutamate, inhibits presynaptic calcium channels, reducing further glutamate release and dampening excitatory signaling. Mechanistically, ligand binding causes a conformation change that triggers signaling via guanine nucleotide-binding proteins (G proteins) and modulates the activity of down-stream effectors, such as adenylate cyclase. May mediate suppression of neurotransmission or may be involved in synaptogenesis or synaptic stabilization. (Microbial infection) Plays an important role in influenza virus internalization. Its function is as follows. (Microbial infection) Acts as a host entry factor for rabies virus that hijacks the endocytosis of GRM2 to enter cells. In terms of biological role, (Microbial infection) Acts as a host entry factor for SARS-CoV-2 that hijacks the endocytosis of GRM2 to enter cells. This chain is Metabotropic glutamate receptor 2, found in Homo sapiens (Human).